Consider the following 608-residue polypeptide: Albumin (608 aa).

Residues 1–18 form the signal peptide; it reads MKWVTFLLLLFISGSAFS. Positions 19-24 are excised as a propeptide; sequence RGVFRR. 3 Albumin domains span residues 19 to 211, 212 to 403, and 404 to 601; these read RGVF…AVKE, KALV…EFQP, and LVEE…NLVA. Residue H27 participates in Cu cation binding. S29 is subject to Phosphoserine. Ca(2+)-binding residues include E30 and D37. A disulfide bridge links C77 with C86. S89 is subject to Phosphoserine. A Zn(2+)-binding site is contributed by H91. Cystine bridges form between C99/C115, C114/C125, C148/C193, C192/C201, C224/C270, and C269/C277. Position 268 (E268) interacts with Ca(2+). 2 residues coordinate Zn(2+): H271 and D273. Residues D273, E276, and D279 each contribute to the Ca(2+) site. Disulfide bonds link C289/C303, C302/C313, C340/C385, C384/C393, C416/C462, C461/C472, C485/C501, and C500/C511. A Phosphoserine modification is found at S297. Phosphoserine is present on S443. Residues T444 and T446 each carry the phosphothreonine modification. K460 is subject to N6-succinyllysine. S513 is modified (phosphoserine). 2 disulfide bridges follow: C538/C583 and C582/C591. K543 carries the post-translational modification N6-succinyllysine. N6-methyllysine is present on K558. Position 570 is a phosphothreonine (T570). N6-succinyllysine is present on K588.

Belongs to the ALB/AFP/VDB family. As to quaternary structure, interacts with FCGRT; this interaction regulates ALB homeostasis. Interacts with TASOR. In plasma, occurs in a covalently-linked complex with chromophore-bound alpha-1-microglobulin; this interaction does not prevent fatty acid binding to ALB. In terms of processing, phosphorylated by FAM20C in the extracellular medium. Plasma.

It localises to the secreted. Functionally, binds water, Ca(2+), Na(+), K(+), fatty acids, hormones, bilirubin and drugs. Its main function is the regulation of the colloidal osmotic pressure of blood. Major zinc transporter in plasma, typically binds about 80% of all plasma zinc. Major calcium and magnesium transporter in plasma, binds approximately 45% of circulating calcium and magnesium in plasma. Potentially has more than two calcium-binding sites and might additionally bind calcium in a non-specific manner. The shared binding site between zinc and calcium at residue Asp-273 suggests a crosstalk between zinc and calcium transport in the blood. The rank order of affinity is zinc &gt; calcium &gt; magnesium. Binds to the bacterial siderophore enterobactin and inhibits enterobactin-mediated iron uptake of E.coli from ferric transferrin, and may thereby limit the utilization of iron and growth of enteric bacteria such as E.coli. Does not prevent iron uptake by the bacterial siderophore aerobactin. This Rattus norvegicus (Rat) protein is Albumin (Alb).